The following is a 1365-amino-acid chain: MEKNLRYKLHKVKKQWVAIGVTTVTLSFLAGGQVVAADTNNNDGTSVQVNKMVPSDPKFDAQAQNGQLAQAMFKAANQADQTATSQVSPATDGRVDNQVTPAANQPAANVANQDVANPATDAGALNRQSAADTSTDGKAVPQTSDQPGHLETVDGKTYYVDANGQRLKNYSMVIDGKTYYFDGQTGEAQTDLPKTGQANQDNVPDSYQANNQAYSNEASSFETVDNYLTADSWYRPRKILKNGQSWQASSEGDLRPILMTWWPDAATKAAYANFWAKEGLISGSYRQNSANLDAATQNIQSAIEKKIASEGNTNWLRDKMSQFVKSQNQWSIASENETVYPNQDHMQGGALLFSNSKDTEHANSDWRLLNRNPTFQTGKQKYFTTNYAGYELLLANDVDNSNPVVQAEQLNHLHYLMNWGDIVMGDKDANFDGVRVDAVDNVNADLLQIQRDYYKAKYGTDQNEKNAIDHLSILEAWSGNDNDYVKDQNNFSLSIDNDQRSGMLKAFGYASAYRGNLSNLATAGLKNRSANPDSDPVPNYVFIRAHDSEVQTRIAKIIREKLGKTNADGLTNLTLDDLNKAFDIYNQDMNATDKVYYPNNLPMAYAWMLQNKDTVTRVYYGDMYTDNGQYMATKTPFYNAIETLLKGRIKYVAGGQAVSYKQDWSSGILTSVRYGKGANSASDAGNTETRNSGMALLINNRPNFRAYRNLTLNMGAAHKSQAYRPLLLSTKDGIATYLNDSDVDSRQYKYTDSQGNLSFSASELQSVANAQVSGMIQVWVPVGAADNQDVRTSPSTQATKDGNIYHQSDALDSQVIYEGFSNFQAFAQSPDQYTNAVIAKNGDLFKSWGITQFEMAPQYVSSEDGTFLDSVILNGYAFSDRYDLAMSKNNKYGSKQDLANAIKGLQSAGIKVLSDLVPNQLYNLPGKEVVTATRVNQYGQAKSGATINKTPYVANTRSYGDYQEQYGGKFLDDLQKLYPRLFSTKQISTGKPIDPSVKITNWSAKYFNGSNILGRGAKYVLSEGNKYLNLADGKLFLPTVLNNTYGQPQVSANGFISKNGGIHYLDKNGQEVKNRFKEISGSWYYFDSDGKMATGKTKIGNDTYLFMPNGKQLKEGVWYDGKKAYYYDDNGRTWTNKGFVEFRVDGQDKWRYFNGDGTIAIGLVSLDNRTLYFDAYGYQVKGQTVTINGKSYTFDADQGDLVQTDNANPAPQGQAGWKLLGDNQWGYRKDGQLLTGEQTIDGQKVFFQDNGVQVKGGTATDASGVLRFYDRDQGHQVGKGWYSTSDDNWVYVNESGQVLTGLQTIDGQTVYFDDKGIQAKGKAVWDENGNLRYFDADSGNMLRDRWKNVDGNWYYFNRNGLATRW.

Residues 1–36 (MEKNLRYKLHKVKKQWVAIGVTTVTLSFLAGGQVVA) constitute a signal peptide (or 37). 2 stretches are compositionally biased toward polar residues: residues 80-89 (DQTATSQVSP) and 127-146 (RQSA…TSDQ). Disordered stretches follow at residues 80 to 99 (DQTA…DNQV) and 127 to 152 (RQSA…HLET). Cell wall-binding repeat units follow at residues 146 to 166 (QPGH…NGQR) and 168 to 187 (KNYS…QTGE). The interval 200-1000 (QDNVPDSYQA…KPIDPSVKIT (801 aa)) is catalytic; approximate. 10 Cell wall-binding repeats span residues 1052–1071 (ANGF…NGQE), 1073–1092 (KNRF…DGKM), 1093–1112 (ATGK…NGKQ), 1113–1133 (LKEG…NGRT), 1136–1159 (NKGF…DGTI), 1160–1179 (AIGL…YGYQ), 1234–1253 (LTGE…NGVQ), 1278–1298 (GKGW…SGQV), 1299–1318 (LTGL…KGIQ), and 1343–1362 (RDRW…NGLA).

It belongs to the glycosyl hydrolase 70 family.

It catalyses the reaction [(1-&gt;6)-alpha-D-glucosyl](n) + sucrose = [(1-&gt;6)-alpha-D-glucosyl](n+1) + D-fructose. With respect to regulation, glucan synthesis by GTF-S is independent of primer glucan unlike GTF-I. Functionally, production of extracellular glucans, that are thought to play a key role in the development of the dental plaque because of their ability to adhere to smooth surfaces and mediate the aggregation of bacterial cells and food debris. The polypeptide is Glucosyltransferase-S (gtfS) (Streptococcus downei (Streptococcus sobrinus)).